The chain runs to 233 residues: Leucyl/phenylalanyl-tRNA--protein transferase (233 aa).

This sequence belongs to the L/F-transferase family.

The protein resides in the cytoplasm. It carries out the reaction N-terminal L-lysyl-[protein] + L-leucyl-tRNA(Leu) = N-terminal L-leucyl-L-lysyl-[protein] + tRNA(Leu) + H(+). The catalysed reaction is N-terminal L-arginyl-[protein] + L-leucyl-tRNA(Leu) = N-terminal L-leucyl-L-arginyl-[protein] + tRNA(Leu) + H(+). The enzyme catalyses L-phenylalanyl-tRNA(Phe) + an N-terminal L-alpha-aminoacyl-[protein] = an N-terminal L-phenylalanyl-L-alpha-aminoacyl-[protein] + tRNA(Phe). Its function is as follows. Functions in the N-end rule pathway of protein degradation where it conjugates Leu, Phe and, less efficiently, Met from aminoacyl-tRNAs to the N-termini of proteins containing an N-terminal arginine or lysine. The protein is Leucyl/phenylalanyl-tRNA--protein transferase of Anaeromyxobacter dehalogenans (strain 2CP-C).